The following is a 470-amino-acid chain: Neuraminidase (470 aa).

The Intravirion portion of the chain corresponds to 1 to 6 (MNPNQK). The chain crosses the membrane as a helical span at residues 7-27 (IITIGSICMAIGIISLILQMG). Residues 11–33 (GSICMAIGIISLILQMGNIISIW) form an involved in apical transport and lipid raft association region. Residues 28–470 (NIISIWVSHS…GAELPFTIDK (443 aa)) lie on the Virion surface side of the membrane. The hypervariable stalk region stretch occupies residues 36–90 (HSIQTGSQNHTGICNQRIITYENSTWVNQTYVNINNTNVVAGKDTTSVTLAGNSS). Residues Asn-44, Asn-58, Asn-63, Asn-70, and Asn-88 are each glycosylated (N-linked (GlcNAc...) asparagine; by host). The segment at 91–470 (LCPIRGWAIY…GAELPFTIDK (380 aa)) is head of neuraminidase. Disulfide bonds link Cys-92–Cys-417, Cys-124–Cys-129, Cys-184–Cys-231, Cys-233–Cys-238, Cys-279–Cys-292, Cys-281–Cys-290, Cys-318–Cys-335, and Cys-421–Cys-447. Residue Arg-118 participates in substrate binding. Residue Asn-146 is glycosylated (N-linked (GlcNAc...) asparagine; by host). The Proton donor/acceptor role is filled by Asp-151. Arg-152 contributes to the substrate binding site. Asn-235 carries N-linked (GlcNAc...) asparagine; by host glycosylation. Residue 277–278 (EE) participates in substrate binding. Residue Arg-293 participates in substrate binding. Residues Asp-294, Gly-298, and Asp-324 each coordinate Ca(2+). An N-linked (GlcNAc...) asparagine; by host glycan is attached at Asn-365. Arg-368 provides a ligand contact to substrate. Tyr-402 functions as the Nucleophile in the catalytic mechanism. The N-linked (GlcNAc...) asparagine; by host glycan is linked to Asn-455.

It belongs to the glycosyl hydrolase 34 family. Homotetramer. The cofactor is Ca(2+). N-glycosylated.

The protein resides in the virion membrane. Its subcellular location is the host apical cell membrane. The catalysed reaction is Hydrolysis of alpha-(2-&gt;3)-, alpha-(2-&gt;6)-, alpha-(2-&gt;8)- glycosidic linkages of terminal sialic acid residues in oligosaccharides, glycoproteins, glycolipids, colominic acid and synthetic substrates.. With respect to regulation, inhibited by the neuraminidase inhibitors zanamivir (Relenza) and oseltamivir (Tamiflu). These drugs interfere with the release of progeny virus from infected cells and are effective against all influenza strains. Resistance to neuraminidase inhibitors is quite rare. Its function is as follows. Catalyzes the removal of terminal sialic acid residues from viral and cellular glycoconjugates. Cleaves off the terminal sialic acids on the glycosylated HA during virus budding to facilitate virus release. Additionally helps virus spread through the circulation by further removing sialic acids from the cell surface. These cleavages prevent self-aggregation and ensure the efficient spread of the progeny virus from cell to cell. Otherwise, infection would be limited to one round of replication. Described as a receptor-destroying enzyme because it cleaves a terminal sialic acid from the cellular receptors. May facilitate viral invasion of the upper airways by cleaving the sialic acid moieties on the mucin of the airway epithelial cells. Likely to plays a role in the budding process through its association with lipid rafts during intracellular transport. May additionally display a raft-association independent effect on budding. Plays a role in the determination of host range restriction on replication and virulence. Sialidase activity in late endosome/lysosome traffic seems to enhance virus replication. This is Neuraminidase from Aves (Human).